A 376-amino-acid polypeptide reads, in one-letter code: Cobalt-precorrin-5B C(1)-methyltransferase (376 aa).

Positions 353–376 (KGRTTSTPSHQPAPSSFGDRNRRT) are disordered. Positions 355–366 (RTTSTPSHQPAP) are enriched in polar residues.

This sequence belongs to the CbiD family.

It catalyses the reaction Co-precorrin-5B + S-adenosyl-L-methionine = Co-precorrin-6A + S-adenosyl-L-homocysteine. Its pathway is cofactor biosynthesis; adenosylcobalamin biosynthesis; cob(II)yrinate a,c-diamide from sirohydrochlorin (anaerobic route): step 6/10. Its function is as follows. Catalyzes the methylation of C-1 in cobalt-precorrin-5B to form cobalt-precorrin-6A. This is Cobalt-precorrin-5B C(1)-methyltransferase from Agrobacterium fabrum (strain C58 / ATCC 33970) (Agrobacterium tumefaciens (strain C58)).